A 396-amino-acid chain; its full sequence is 2,3-diketo-5-methylthiopentyl-1-phosphate enolase (396 aa).

K85 serves as the catalytic Proton acceptor. Residues K134, 160–163, H251, G323, and 345–346 contribute to the substrate site; these read KDDE and GG. 3 residues coordinate Mg(2+): K160, D162, and E163. K160 carries the post-translational modification N6-carboxylysine.

This sequence belongs to the RuBisCO large chain family. Type IV subfamily. Homodimer. Mg(2+) is required as a cofactor.

It catalyses the reaction 5-methylsulfanyl-2,3-dioxopentyl phosphate = 2-hydroxy-5-methylsulfanyl-3-oxopent-1-enyl phosphate. Its pathway is amino-acid biosynthesis; L-methionine biosynthesis via salvage pathway; L-methionine from S-methyl-5-thio-alpha-D-ribose 1-phosphate: step 3/6. Its function is as follows. Catalyzes the enolization of 2,3-diketo-5-methylthiopentyl-1-phosphate (DK-MTP-1-P) into 2-hydroxy-3-keto-5-methylthiopentenyl-1-phosphate (HK-MTPenyl-1-P). The protein is 2,3-diketo-5-methylthiopentyl-1-phosphate enolase of Exiguobacterium sibiricum (strain DSM 17290 / CCUG 55495 / CIP 109462 / JCM 13490 / 255-15).